A 119-amino-acid chain; its full sequence is Protein SPIRAL1 (119 aa).

Residues 1 to 11 are compositionally biased toward gly residues; the sequence is MGRGNSCGGGQ. Disordered regions lie at residues 1–47 and 85–105; these read MGRG…PPVT and EGQNTGNFLTDRPSTKVHAAP. Residues 24 to 34 are compositionally biased toward pro residues; that stretch reads APKPVPAPRPA.

Belongs to the SPIRAL1 family. Ubiquitinated. Upon salt-stress induction, it is subject to proteasome-dependent degradation. Ubiquitous. High expression was associated with tissues undergoing rapid cell expansion, including the root elongation zone, hypocotyls of dark grown-seedlings, and cotyledons of light-grown seedlings.

It localises to the cytoplasm. The protein localises to the cytoskeleton. The protein resides in the phragmoplast. It is found in the spindle. In terms of biological role, required for directional control of cell elongation. Stabilizes growing ends of cortical microtubules and influences their dynamic properties. Acts redundantly with SP1Ls in maintaining the cortical microtubules organization essential for anisotropic cell growth. Plays a key role in salt stress-induced microtubules disassembly. This is Protein SPIRAL1 (SPR1) from Arabidopsis thaliana (Mouse-ear cress).